A 184-amino-acid chain; its full sequence is ATP synthase subunit b, chloroplastic (184 aa).

The chain crosses the membrane as a helical span at residues 27-49; that stretch reads FATNPINLSVVLGVLIFFGKGVL.

It belongs to the ATPase B chain family. F-type ATPases have 2 components, F(1) - the catalytic core - and F(0) - the membrane proton channel. F(1) has five subunits: alpha(3), beta(3), gamma(1), delta(1), epsilon(1). F(0) has four main subunits: a(1), b(1), b'(1) and c(10-14). The alpha and beta chains form an alternating ring which encloses part of the gamma chain. F(1) is attached to F(0) by a central stalk formed by the gamma and epsilon chains, while a peripheral stalk is formed by the delta, b and b' chains.

The protein localises to the plastid. The protein resides in the chloroplast thylakoid membrane. F(1)F(0) ATP synthase produces ATP from ADP in the presence of a proton or sodium gradient. F-type ATPases consist of two structural domains, F(1) containing the extramembraneous catalytic core and F(0) containing the membrane proton channel, linked together by a central stalk and a peripheral stalk. During catalysis, ATP synthesis in the catalytic domain of F(1) is coupled via a rotary mechanism of the central stalk subunits to proton translocation. In terms of biological role, component of the F(0) channel, it forms part of the peripheral stalk, linking F(1) to F(0). This Ipomoea purpurea (Common morning glory) protein is ATP synthase subunit b, chloroplastic.